The primary structure comprises 388 residues: Succinate--CoA ligase [ADP-forming] subunit beta (388 aa).

The 236-residue stretch at 9 to 244 (KQLFAEYGLP…PSQEDEREAH (236 aa)) folds into the ATP-grasp domain. Residues Lys46, 53–55 (GRG), Glu99, Thr102, and Glu107 contribute to the ATP site. Mg(2+)-binding residues include Asn199 and Asp213. Substrate is bound by residues Asn264 and 321–323 (GIV).

Belongs to the succinate/malate CoA ligase beta subunit family. As to quaternary structure, heterotetramer of two alpha and two beta subunits. Requires Mg(2+) as cofactor.

It carries out the reaction succinate + ATP + CoA = succinyl-CoA + ADP + phosphate. The catalysed reaction is GTP + succinate + CoA = succinyl-CoA + GDP + phosphate. It participates in carbohydrate metabolism; tricarboxylic acid cycle; succinate from succinyl-CoA (ligase route): step 1/1. Functionally, succinyl-CoA synthetase functions in the citric acid cycle (TCA), coupling the hydrolysis of succinyl-CoA to the synthesis of either ATP or GTP and thus represents the only step of substrate-level phosphorylation in the TCA. The beta subunit provides nucleotide specificity of the enzyme and binds the substrate succinate, while the binding sites for coenzyme A and phosphate are found in the alpha subunit. The protein is Succinate--CoA ligase [ADP-forming] subunit beta of Colwellia psychrerythraea (strain 34H / ATCC BAA-681) (Vibrio psychroerythus).